A 53-amino-acid chain; its full sequence is UPF0391 membrane protein ETA_06630 (53 aa).

2 helical membrane-spanning segments follow: residues 4–24 and 27–47; these read WGII…GGLA and AAWA…ISLF.

Belongs to the UPF0391 family.

It localises to the cell membrane. This Erwinia tasmaniensis (strain DSM 17950 / CFBP 7177 / CIP 109463 / NCPPB 4357 / Et1/99) protein is UPF0391 membrane protein ETA_06630.